The primary structure comprises 313 residues: Acetyl-coenzyme A carboxylase carboxyl transferase subunit beta, chloroplastic (313 aa).

In terms of domain architecture, CoA carboxyltransferase N-terminal spans 47–313; it reads LWTRCDNCEN…SAPCRRSNNS (267 aa). Positions 51, 54, 70, and 73 each coordinate Zn(2+). A C4-type zinc finger spans residues 51–73; sequence CDNCENMLYIRFLRQNKRICEEC.

Belongs to the AccD/PCCB family. As to quaternary structure, acetyl-CoA carboxylase is a heterohexamer composed of biotin carboxyl carrier protein, biotin carboxylase and 2 subunits each of ACCase subunit alpha and ACCase plastid-coded subunit beta (accD). The cofactor is Zn(2+).

It localises to the plastid. The protein resides in the chloroplast stroma. It carries out the reaction N(6)-carboxybiotinyl-L-lysyl-[protein] + acetyl-CoA = N(6)-biotinyl-L-lysyl-[protein] + malonyl-CoA. It participates in lipid metabolism; malonyl-CoA biosynthesis; malonyl-CoA from acetyl-CoA: step 1/1. In terms of biological role, component of the acetyl coenzyme A carboxylase (ACC) complex. Biotin carboxylase (BC) catalyzes the carboxylation of biotin on its carrier protein (BCCP) and then the CO(2) group is transferred by the transcarboxylase to acetyl-CoA to form malonyl-CoA. This Anthoceros angustus (Hornwort) protein is Acetyl-coenzyme A carboxylase carboxyl transferase subunit beta, chloroplastic.